We begin with the raw amino-acid sequence, 600 residues long: MLCSVIQRQTREVSNTMSLDSYYLGFDLSTQQLKCLAINQDLKIVHSETVEFEKDLPHYHTKKGVYIHGDTIECPVAMWLEALDLVLSKYREAKFPLNKVMAVSGSCQQHGSVYWSSQAESLLEQLNKKPEKDLLHYVSSVAFARQTAPNWQDHSTAKQCQEFEECIGGPEKMAQLTGSRAHFRFTGPQILKIAQLEPEAYEKTKTISLVSNFLTSILVGHLVELEEADACGMNLYDIRERKFSDELLHLIDSSSKDKTIRQKLMRAPMKNLIAGTICKYFIEKYGFNTNCKVSPMTGDNLATICSLPLRKNDVLVSLGTSTTVLLVTDKYHPSPNYHLFIHPTLPNHYMGMICYCNGSLARERIRDELNKERENNYEKTNDWTLFNQAVLDDSESSENELGVYFPLGEIVPSVKAINKRVIFNPKTGMIEREVAKFKDKRHDAKNIVESQALSCRVRISPLLSDSNASSQQRLNEDTIVKFDYDESPLRDYLNKRPERTFFVGGASKNDAIVKKFAQVIGATKGNFRLETPNSCALGGCYKAMWSLLYDSNKIAVPFDKFLNDNFPWHVMESISDVDNENWDRYNSKIVPLSELEKTLI.

79–82 serves as a coordination point for substrate; sequence WLEA. Position 244 is a phosphoserine (Ser244). Asp299 provides a ligand contact to substrate. Residues Gly358 and 505-509 contribute to the ATP site; that span reads GASKN.

It belongs to the FGGY kinase family.

Its subcellular location is the cytoplasm. The enzyme catalyses D-xylulose + ATP = D-xylulose 5-phosphate + ADP + H(+). Its function is as follows. Xylulose kinase necessary for growth in culture media with D-xylulose as the solecarbon source. This is Xylulose kinase from Saccharomyces cerevisiae (strain ATCC 204508 / S288c) (Baker's yeast).